Consider the following 423-residue polypeptide: Transmembrane protein 130 (423 aa).

An N-terminal signal peptide occupies residues 1 to 24 (MAQAVWSRLGRILWLSCLLPWAPA). Residues 25–339 (GVAAGLYELN…IQVWPSRIQP (315 aa)) are Extracellular-facing. Asn34, Asn197, and Asn300 each carry an N-linked (GlcNAc...) asparagine glycan. Residues 147–233 (WPSSYLTKTI…AVMQKTGDFS (87 aa)) form the PKD domain. Residues 340-360 (AVFAFPCATLITVMLAFIMYM) traverse the membrane as a helical segment. At 361-423 (TLRNATQQKD…LYKSVKTYTV (63 aa)) the chain is on the cytoplasmic side.

It is found in the golgi apparatus membrane. The chain is Transmembrane protein 130 (TMEM130) from Pongo abelii (Sumatran orangutan).